We begin with the raw amino-acid sequence, 536 residues long: Chaperonin GroEL 2 (536 aa).

Residues Thr-29–Pro-32, Asp-86–Thr-90, Gly-413, Asn-476–Ala-478, and Asp-492 contribute to the ATP site.

Belongs to the chaperonin (HSP60) family. As to quaternary structure, forms a cylinder of 14 subunits composed of two heptameric rings stacked back-to-back. Interacts with the co-chaperonin GroES.

It localises to the cytoplasm. The catalysed reaction is ATP + H2O + a folded polypeptide = ADP + phosphate + an unfolded polypeptide.. Its function is as follows. Together with its co-chaperonin GroES, plays an essential role in assisting protein folding. The GroEL-GroES system forms a nano-cage that allows encapsulation of the non-native substrate proteins and provides a physical environment optimized to promote and accelerate protein folding. The chain is Chaperonin GroEL 2 from Moorella thermoacetica (strain ATCC 39073 / JCM 9320).